The sequence spans 251 residues: D-aminoacyl-tRNA deacylase (251 aa).

It belongs to the DtdA deacylase family. Monomer. Requires Zn(2+) as cofactor.

The catalysed reaction is a D-aminoacyl-tRNA + H2O = a tRNA + a D-alpha-amino acid + H(+). It catalyses the reaction glycyl-tRNA(Ala) + H2O = tRNA(Ala) + glycine + H(+). Its function is as follows. D-aminoacyl-tRNA deacylase with broad substrate specificity. By recycling D-aminoacyl-tRNA to D-amino acids and free tRNA molecules, this enzyme counteracts the toxicity associated with the formation of D-aminoacyl-tRNA entities in vivo. In Pyrobaculum calidifontis (strain DSM 21063 / JCM 11548 / VA1), this protein is D-aminoacyl-tRNA deacylase.